A 1844-amino-acid chain; its full sequence is Non-structural replication polyprotein (1844 aa).

Positions 58–219 (SGLGTSHHPH…NQPSDAHSWL (162 aa)) constitute an Alphavirus-like MT domain. The tract at residues 571 to 739 (TAFLPFTPTT…QLLPAPLTND (169 aa)) is disordered. Composition is skewed to low complexity over residues 609-621 (SSPG…TTAA) and 726-736 (LPSSQLLPAPL). One can recognise an OTU domain in the interval 728–879 (SSQLLPAPLT…FSPGKRLLGS (152 aa)). The Peptidase C21 domain occupies 730–884 (QLLPAPLTND…RLLGSQPSAK (155 aa)). The For protease activity role is filled by cysteine 783. The disordered stretch occupies residues 859–887 (DITHTTGPPSHFSPGKRLLGSQPSAKGHP). A GPP flap motif is present at residues 865–867 (GPP). Histidine 869 acts as the For protease activity in catalysis. Positions 946 to 1103 (TGPTPKERII…RLLPYIDMYC (158 aa)) constitute a (+)RNA virus helicase ATP-binding domain. 976-983 (GFAGCGKT) contributes to the ATP binding site. One can recognise a (+)RNA virus helicase C-terminal domain in the interval 1104–1236 (WWSYRIPQCI…SLIIMDRYFP (133 aa)). The RdRp catalytic domain occupies 1572–1678 (TPKIANDYTA…DHPLPTRHDW (107 aa)).

The protein belongs to the Tymoviridae non-structural replication polyprotein family. Interacts with host ubiquitin. Post-translationally, specific enzymatic cleavages by the host yield mature proteins.

The protein localises to the host chloroplast envelope. The catalysed reaction is Thiol-dependent hydrolysis of ester, thioester, amide, peptide and isopeptide bonds formed by the C-terminal Gly of ubiquitin (a 76-residue protein attached to proteins as an intracellular targeting signal).. It carries out the reaction RNA(n) + a ribonucleoside 5'-triphosphate = RNA(n+1) + diphosphate. Acts as a cysteine protease, methyltransferase and deubiquitinase. The cysteine protease activity cleaves the polyprotein giving rise to mature proteins. The protease has the ability to process substrates in trans. The methyltransferase domain is probably involved in viral RNA capping. The deubiquitylating activity counteracts the degradation of the viral polymerase mediated by the host ubiquitin-proteasome system. The polymerase is thus stabilized and infectivity is increased. Favors K63 poly-Ub linkage. Its function is as follows. RNA-directed RNA polymerase is responsible for the replication and transcription of the genome. This is Non-structural replication polyprotein from Turnip yellow mosaic virus.